The sequence spans 471 residues: Thiohydroximate-O-sulfate sulfur/sulfate-lyase (nitrile-forming) NSP2 (471 aa).

Residues 2-144 enclose the Jacalin-type lectin domain; it reads VQKVEARGGE…LHSLGAYISS (143 aa). 6 Kelch repeats span residues 178 to 226, 231 to 277, 281 to 330, 332 to 379, 381 to 435, and 446 to 471; these read KIFS…VRMV, SLYV…SMTA, NVYV…VVQG, VWVV…VVGK, ILVF…GWSA, and GLVM…VDSA. The active-site Proton donor is arginine 238. Residues arginine 238, serine 271, arginine 293, glycine 322, and valine 371 each contribute to the a (Z)-N-(sulfonatooxy)alkanimidothioate site. Catalysis depends on arginine 293, which acts as the Proton donor. Fe(2+) is bound by residues glutamate 387, aspartate 391, and histidine 395. Tryptophan 433 contacts a (Z)-N-(sulfonatooxy)alkanimidothioate.

This sequence belongs to the jacalin lectin family. Requires Fe(2+) as cofactor. In terms of tissue distribution, expressed only in seeds.

The enzyme catalyses a (Z)-N-(sulfonatooxy)alkanimidothioate = a nitrile + sulfur + sulfate. It catalyses the reaction (Z)-phenyl-N-(sulfonatooxy)methanimidothioate = phenylacetonitrile + sulfur + sulfate. The catalysed reaction is (Z)-N-(sulfonatooxy)prop-2-enimidothioate = but-3-enenitrile + sulfur + sulfate. It carries out the reaction (Z)-(indol-3-yl)-N-(sulfonatooxy)methanimidothioate = (indol-3-yl)acetonitrile + sulfur + sulfate. The presence of Fe(2+) supports lyase activity in a dose-dependent manner with both benzylglucosinolate and 2-propenylglucosinolate as substrates. More active at pH 7.4 than at pH 6. Specifier protein responsible for constitutive and herbivore-induced simple nitrile formation, especially in seeds. Promotes simple nitriles, but not epithionitrile or thiocyanate formation. Converts allylglucosinolate (allyl-GSL), 2-propenylglucosinolate (sinigrin), indol-3-ylmethylglucosinolate (glucobrassicin), benzylisothiocyanate and benzylglucosinolate (glucotropaeolin) to their corresponding simple nitriles in the presence of myrosinase. Catalyzes mainly the conversion of benzylisothiocyanate when benzylglucosinolate is used as the initial substrate of myrosinase. Involved in the regulation of glucosinolate content in seeds, during stratification and germination. This Arabidopsis thaliana (Mouse-ear cress) protein is Thiohydroximate-O-sulfate sulfur/sulfate-lyase (nitrile-forming) NSP2.